Reading from the N-terminus, the 231-residue chain is NADH-ubiquinone oxidoreductase chain 4 (231 aa).

7 helical membrane passes run proline 1–isoleucine 21, leucine 34–leucine 54, serine 61–isoleucine 80, tryptophan 84–leucine 106, isoleucine 118–leucine 138, leucine 156–serine 176, and leucine 211–isoleucine 231.

Belongs to the complex I subunit 4 family.

It is found in the mitochondrion membrane. The enzyme catalyses a ubiquinone + NADH + 5 H(+)(in) = a ubiquinol + NAD(+) + 4 H(+)(out). Its function is as follows. Core subunit of the mitochondrial membrane respiratory chain NADH dehydrogenase (Complex I) that is believed to belong to the minimal assembly required for catalysis. Complex I functions in the transfer of electrons from NADH to the respiratory chain. The immediate electron acceptor for the enzyme is believed to be ubiquinone. This chain is NADH-ubiquinone oxidoreductase chain 4 (MT-ND4), found in Hypnale hypnale (Merrem's hump-nosed viper).